Reading from the N-terminus, the 394-residue chain is Saposin-like protein 11 (394 aa).

The first 18 residues, 1–18, serve as a signal peptide directing secretion; sequence MSVFRFLLFLSLLVGSNA. Residues Asn-25 and Asn-272 are each glycosylated (N-linked (GlcNAc...) asparagine). Positions 306–394 constitute a Saposin B-type domain; that stretch reads GNMVCDICEK…SFCKHVPFCK (89 aa). 3 disulfides stabilise this stretch: Cys-310-Cys-393, Cys-313-Cys-387, and Cys-343-Cys-359.

The sequence is that of Saposin-like protein 11 (spp-11) from Caenorhabditis elegans.